The following is a 484-amino-acid chain: MDDCSKDIINCLPDNLLCQILSNLSTKEAALTSLLSKRWRYLFALVPNLDFDVLPSLHPEVAMQDQDQTSFIDFVDRVLKLRGKDHINKFSLKCGDGIEDEDVFPWILNTLRHGVSDLSLHVSPSLVYWLPSKVFASKTLVRLKIGPKDGPRVKLRNVCLPKLKTLNLDSVVFEEGKIGFAKLLSGCPVLEELSLLNLAWDRWDSCSVSSKILKRLTLYCAHSSRNPKSVSFDTPNVVYFEYSDNIANKYPKVNFDSLVEASIGIRMTKVQKANARYVSDVDEETEMVGNATDLLMGICNVKTLYLSYDTLETLNLCCQVIPVFNNLTHLTIESHPELGWESLPNLLKSCPNLGTLVFQGLLHKATDRCGDVCMCQGLENSHSCLSSSPVKCLKILKFGETNDDDDMEIEMEQIKNFLEKMPNLEQLIIYYESSIDNDLVRVSSQLQEVPTVASLKCKIQVISDNLSLSSTLPISLSMENGFHL.

An F-box domain is found at 6 to 54 (KDIINCLPDNLLCQILSNLSTKEAALTSLLSKRWRYLFALVPNLDFDVL). 5 LRR repeats span residues 144–170 (KIGP…NLDS), 172–197 (VFEE…SLLN), 205–234 (SCSV…SFDT), 303–334 (TLYL…TIES), and 335–360 (HPEL…VFQG).

In Arabidopsis thaliana (Mouse-ear cress), this protein is F-box/LRR-repeat protein At3g59210.